A 465-amino-acid chain; its full sequence is Zinc finger and BTB domain-containing protein 32 (465 aa).

Residues 29-87 enclose the BTB domain; it reads CDTLITVGGLEFPAHSLVLAGASPRLGCRGRWALVEDISPSTFAQILTFVYGESIELQP. Disordered stretches follow at residues 111 to 179 and 285 to 310; these read RAQK…EMAG and QNQL…PWQI. Composition is skewed to basic and acidic residues over residues 123-139 and 147-176; these read PGLK…RGSE and EKQK…ERPE. 3 consecutive C2H2-type zinc fingers follow at residues 350–372, 378–400, and 405–427; these read YSCS…YRVH, FSCS…LRTH, and YRCP…MRGH.

This sequence belongs to the krueppel C2H2-type zinc-finger protein family. As to quaternary structure, homodimer (via PTB domain). Interacts with the N-terminal of FANCC. Interacts with ZBTB16. Interacts with GATA3. As to expression, isoform 1 is testis-specific and is not expressed in lymphoid organs such as thymus or spleen. Isoform 2 is expressed in both B- and T-lymphoid cells.

It is found in the nucleus. DNA-binding protein that binds to the to a 5'-TGTACAGTGT-3' core sequence. May function as a transcriptional transactivator and transcriptional repressor. Probably exerts its repressor effect by preventing GATA3 from binding to DNA. May play a role in regulating the differentiation and activation of helper T-cells. This Mus musculus (Mouse) protein is Zinc finger and BTB domain-containing protein 32 (Zbtb32).